A 193-amino-acid chain; its full sequence is Large ribosomal subunit protein uL5 (193 aa).

It belongs to the universal ribosomal protein uL5 family. As to quaternary structure, part of the 50S ribosomal subunit; part of the 5S rRNA/L5/L18/L25 subcomplex. Contacts the 5S rRNA and the P site tRNA. Forms a bridge to the 30S subunit in the 70S ribosome.

This is one of the proteins that bind and probably mediate the attachment of the 5S RNA into the large ribosomal subunit, where it forms part of the central protuberance. In the 70S ribosome it contacts protein S13 of the 30S subunit (bridge B1b), connecting the 2 subunits; this bridge is implicated in subunit movement. Contacts the P site tRNA; the 5S rRNA and some of its associated proteins might help stabilize positioning of ribosome-bound tRNAs. The polypeptide is Large ribosomal subunit protein uL5 (Corynebacterium urealyticum (strain ATCC 43042 / DSM 7109)).